A 505-amino-acid polypeptide reads, in one-letter code: Transcription factor VHR2 (505 aa).

Basic and acidic residues predominate over residues 1–16; that stretch reads MIDDTENSKIHLEGSH. 3 disordered regions span residues 1–23, 105–179, and 421–460; these read MIDD…KYTG, NRKR…LPYP, and QSNP…STSA. Low complexity predominate over residues 133–148; the sequence is PSSSNMGSCSASNASS. The segment covering 421–443 has biased composition (polar residues); it reads QSNPMRPHSTSEVLSAHSSTKDA.

This sequence belongs to the VHR1 family.

The protein resides in the nucleus. Its function is as follows. Transcription factor that regulates ERG9, but seems to have a more global function in transcription. The chain is Transcription factor VHR2 (VHR2) from Saccharomyces cerevisiae (strain ATCC 204508 / S288c) (Baker's yeast).